Reading from the N-terminus, the 919-residue chain is Valine--tRNA ligase (919 aa).

A 'HIGH' region motif is present at residues 66-76 (PNVTGQLHMGH). Residues 562–566 (KMSKS) carry the 'KMSKS' region motif. Lys-565 serves as a coordination point for ATP. A coiled-coil region spans residues 852–919 (TVDKEAERKR…RISARLEELK (68 aa)).

Belongs to the class-I aminoacyl-tRNA synthetase family. ValS type 1 subfamily. In terms of assembly, monomer.

The protein localises to the cytoplasm. It carries out the reaction tRNA(Val) + L-valine + ATP = L-valyl-tRNA(Val) + AMP + diphosphate. Its function is as follows. Catalyzes the attachment of valine to tRNA(Val). As ValRS can inadvertently accommodate and process structurally similar amino acids such as threonine, to avoid such errors, it has a 'posttransfer' editing activity that hydrolyzes mischarged Thr-tRNA(Val) in a tRNA-dependent manner. The chain is Valine--tRNA ligase from Corynebacterium diphtheriae (strain ATCC 700971 / NCTC 13129 / Biotype gravis).